We begin with the raw amino-acid sequence, 548 residues long: Uridine-cytidine kinase-like 1 (548 aa).

The segment covering 1–18 (MAAPPASMSAAPSPLQSA) has biased composition (low complexity). The tract at residues 1-74 (MAAPPASMSA…CKSEPPLLRT (74 aa)) is disordered. Phosphoserine occurs at positions 56 and 63. Position 105-112 (105-112 (GGSASGKT)) interacts with ATP. Residue S539 is modified to Phosphoserine.

Belongs to the uridine kinase family. As to quaternary structure, interacts with RNF19B. Ubiquitinated by RNF19B; which induces proteasomal degradation.

The protein localises to the cytoplasm. Its subcellular location is the nucleus. The enzyme catalyses uridine + ATP = UMP + ADP + H(+). The catalysed reaction is cytidine + ATP = CMP + ADP + H(+). The protein operates within pyrimidine metabolism; UMP biosynthesis via salvage pathway; UMP from uridine: step 1/1. Functionally, may contribute to UTP accumulation needed for blast transformation and proliferation. This is Uridine-cytidine kinase-like 1 (Uckl1) from Mus musculus (Mouse).